The sequence spans 394 residues: Succinate--CoA ligase [ADP-forming] subunit beta (394 aa).

Residues K46, 53–55, E99, C102, and E107 each bind ATP; that span reads GRG. Mg(2+) contacts are provided by N199 and D213. Residues N264 and 321 to 323 contribute to the substrate site; that span reads GIV.

This sequence belongs to the succinate/malate CoA ligase beta subunit family. In terms of assembly, heterotetramer of two alpha and two beta subunits. It depends on Mg(2+) as a cofactor.

The catalysed reaction is succinate + ATP + CoA = succinyl-CoA + ADP + phosphate. It catalyses the reaction GTP + succinate + CoA = succinyl-CoA + GDP + phosphate. The protein operates within carbohydrate metabolism; tricarboxylic acid cycle; succinate from succinyl-CoA (ligase route): step 1/1. Functionally, succinyl-CoA synthetase functions in the citric acid cycle (TCA), coupling the hydrolysis of succinyl-CoA to the synthesis of either ATP or GTP and thus represents the only step of substrate-level phosphorylation in the TCA. The beta subunit provides nucleotide specificity of the enzyme and binds the substrate succinate, while the binding sites for coenzyme A and phosphate are found in the alpha subunit. The chain is Succinate--CoA ligase [ADP-forming] subunit beta from Haemophilus influenzae (strain PittGG).